The chain runs to 116 residues: Small ribosomal subunit protein uS10m (116 aa).

It belongs to the universal ribosomal protein uS10 family.

Its subcellular location is the mitochondrion. The chain is Small ribosomal subunit protein uS10m (RPS10) from Reclinomonas americana.